A 74-amino-acid chain; its full sequence is Conotoxin Bu4 (74 aa).

The first 22 residues, 1 to 22 (MKLTCVVIVAVLLLTACQLIIA), serve as a signal peptide directing secretion. Residues 23-45 (EDSRGTQLHRALRKATKLSVSTR) constitute a propeptide that is removed on maturation. 3 disulfides stabilise this stretch: cysteine 47–cysteine 63, cysteine 54–cysteine 66, and cysteine 62–cysteine 73.

The protein belongs to the conotoxin O1 superfamily. As to expression, expressed by the venom duct.

Its subcellular location is the secreted. In Conus bullatus (Bubble cone), this protein is Conotoxin Bu4.